Here is a 54-residue protein sequence, read N- to C-terminus: Ovomucoid (54 aa).

The Kazal-like domain occupies 4–54 (VDCSDYPKPVCSLEYMPLCGSDNKTYGNKCNFCNAVADSNGTLTLSHFGKC). Cystine bridges form between cysteine 6-cysteine 36, cysteine 14-cysteine 33, and cysteine 22-cysteine 54. Residue asparagine 43 is glycosylated (N-linked (GlcNAc...) asparagine).

It localises to the secreted. The sequence is that of Ovomucoid from Guira guira (Guira cuckoo).